Here is a 215-residue protein sequence, read N- to C-terminus: MRKKVLITGFDPFDKETVNPSWEAAKRLNGFETEEAIITAEQIPTVFRSALDTLRQAIQKHQPDIVICVGQAGGRMQITPERVAINLADARIPDNEGHQPIDEEISPDGPAAYWTRLPVKRMTAKMKEHGIPAAVSYTAGTFVCNYLFYGLMDHISRTSPHIRGGFIHIPYIPQQTIDKTAPSLSLDTIVRALRIAAVTAAQYDEDVKSPGGTLH.

Residues glutamate 81, cysteine 144, and histidine 168 contribute to the active site.

This sequence belongs to the peptidase C15 family. Homotetramer.

It is found in the cytoplasm. The enzyme catalyses Release of an N-terminal pyroglutamyl group from a polypeptide, the second amino acid generally not being Pro.. In terms of biological role, removes 5-oxoproline from various penultimate amino acid residues except L-proline. This chain is Pyrrolidone-carboxylate peptidase (pcp), found in Bacillus subtilis (strain 168).